A 642-amino-acid chain; its full sequence is Threonine--tRNA ligase (642 aa).

Residues 1 to 61 enclose the TGS domain; sequence MPVITLPDGS…SEDANLVIFT (61 aa). Residues 243 to 534 are catalytic; that stretch reads DHRKLAKKFD…LIEHYEGSFP (292 aa). The Zn(2+) site is built by C334, H385, and H511.

The protein belongs to the class-II aminoacyl-tRNA synthetase family. Homodimer. The cofactor is Zn(2+).

It localises to the cytoplasm. It catalyses the reaction tRNA(Thr) + L-threonine + ATP = L-threonyl-tRNA(Thr) + AMP + diphosphate + H(+). Its function is as follows. Catalyzes the attachment of threonine to tRNA(Thr) in a two-step reaction: L-threonine is first activated by ATP to form Thr-AMP and then transferred to the acceptor end of tRNA(Thr). Also edits incorrectly charged L-seryl-tRNA(Thr). The chain is Threonine--tRNA ligase from Cellvibrio japonicus (strain Ueda107) (Pseudomonas fluorescens subsp. cellulosa).